We begin with the raw amino-acid sequence, 431 residues long: Levansucrase LscB (431 aa).

Sucrose-binding residues include Trp-61, Asp-62, Ala-148, Arg-218, and Asp-219. Asp-62 serves as the catalytic Nucleophile. The active-site Proton donor/acceptor is the Glu-303.

The protein belongs to the glycosyl hydrolase 68 family.

It localises to the secreted. It catalyses the reaction [6)-beta-D-fructofuranosyl-(2-&gt;](n) alpha-D-glucopyranoside + sucrose = [6)-beta-D-fructofuranosyl-(2-&gt;](n+1) alpha-D-glucopyranoside + D-glucose. Functionally, catalyzes the synthesis of levan, a fructose polymer, by transferring the fructosyl moiety from sucrose to a growing acceptor molecule. This is Levansucrase LscB from Pseudomonas savastanoi pv. glycinea (Pseudomonas syringae pv. glycinea).